A 186-amino-acid chain; its full sequence is Ribosomal RNA small subunit methyltransferase G (186 aa).

Residues glycine 59, phenylalanine 64, isoleucine 110–glutamate 111, and arginine 124 each bind S-adenosyl-L-methionine.

It belongs to the methyltransferase superfamily. RNA methyltransferase RsmG family.

The protein localises to the cytoplasm. It catalyses the reaction guanosine(527) in 16S rRNA + S-adenosyl-L-methionine = N(7)-methylguanosine(527) in 16S rRNA + S-adenosyl-L-homocysteine. Its function is as follows. Specifically methylates the N7 position of guanine in position 527 of 16S rRNA. This chain is Ribosomal RNA small subunit methyltransferase G, found in Campylobacter curvus (strain 525.92).